Reading from the N-terminus, the 201-residue chain is Glutathione peroxidase 1 (201 aa).

Ser32 is subject to Phosphoserine. The active site involves Sec47. Sec47 is a non-standard amino acid (selenocysteine). Residues Lys86, Lys112, and Lys146 each carry the N6-acetyllysine; alternate modification. N6-succinyllysine; alternate occurs at positions 86, 112, and 146. Phosphoserine occurs at positions 195 and 199.

The protein belongs to the glutathione peroxidase family. Homotetramer. Interacts with MIEN1. Post-translationally, during periods of oxidative stress, Sec-47 may react with a superoxide radical, irreversibly lose hydroselenide and be converted to dehydroalanine.

It localises to the cytoplasm. The protein localises to the mitochondrion. The enzyme catalyses 2 glutathione + H2O2 = glutathione disulfide + 2 H2O. It catalyses the reaction a hydroperoxy polyunsaturated fatty acid + 2 glutathione = a hydroxy polyunsaturated fatty acid + glutathione disulfide + H2O. It carries out the reaction tert-butyl hydroperoxide + 2 glutathione = tert-butanol + glutathione disulfide + H2O. The catalysed reaction is cumene hydroperoxide + 2 glutathione = 2-phenylpropan-2-ol + glutathione disulfide + H2O. The enzyme catalyses (13S)-hydroperoxy-(9Z,11E)-octadecadienoate + 2 glutathione = (13S)-hydroxy-(9Z,11E)-octadecadienoate + glutathione disulfide + H2O. It catalyses the reaction (9S)-hydroperoxy-(10E,12Z)-octadecadienoate + 2 glutathione = (9S)-hydroxy-(10E,12Z)-octadecadienoate + glutathione disulfide + H2O. It carries out the reaction (5S)-hydroperoxy-(6E,8Z,11Z,14Z)-eicosatetraenoate + 2 glutathione = (5S)-hydroxy-(6E,8Z,11Z,14Z)-eicosatetraenoate + glutathione disulfide + H2O. The catalysed reaction is (12S)-hydroperoxy-(5Z,8Z,10E,14Z)-eicosatetraenoate + 2 glutathione = (12S)-hydroxy-(5Z,8Z,10E,14Z)-eicosatetraenoate + glutathione disulfide + H2O. The enzyme catalyses (12R)-hydroperoxy-(5Z,8Z,10E,14Z)-eicosatetraenoate + 2 glutathione = (12R)-hydroxy-(5Z,8Z,10E,14Z)-eicosatetraenoate + glutathione disulfide + H2O. It catalyses the reaction (15S)-hydroperoxy-(5Z,8Z,11Z,13E)-eicosatetraenoate + 2 glutathione = (15S)-hydroxy-(5Z,8Z,11Z,13E)-eicosatetraenoate + glutathione disulfide + H2O. It carries out the reaction (5S)-hydroperoxy-(6E,8Z,11Z,14Z,17Z)-eicosapentaenoate + 2 glutathione = (5S)-hydroxy-(6E,8Z,11Z,14Z,17Z)-eicosapentaenoate + glutathione disulfide + H2O. The catalysed reaction is (12S)-hydroperoxy-(5Z,8Z,10E,14Z,17Z)-eicosapentaenoate + 2 glutathione = (12S)-hydroxy-(5Z,8Z,10E,14Z,17Z)-eicosapentaenoate + glutathione disulfide + H2O. The enzyme catalyses (15S)-hydroperoxy-(5Z,8Z,11Z,13E,17Z)-eicosapentaenoate + 2 glutathione = (15S)-hydroxy-(5Z,8Z,11Z,13E,17Z)-eicosapentaenoate + glutathione disulfide + H2O. It catalyses the reaction (15S)-hydroperoxy-(11Z,13E)-eicosadienoate + 2 glutathione = (15S)-hydroxy-(11Z,13E)-eicosadienoate + glutathione disulfide + H2O. It carries out the reaction (17S)-hydroperoxy-(4Z,7Z,10Z,13Z,15E,19Z)-docosahexaenoate + 2 glutathione = (17S)-hydroxy-(4Z,7Z,10Z,13Z,15E,19Z)-docosahexaenoate + glutathione disulfide + H2O. In terms of biological role, catalyzes the reduction of hydroperoxides in a glutathione-dependent manner thus regulating cellular redox homeostasis. Can reduce small soluble hydroperoxides such as H2O2, cumene hydroperoxide and tert-butyl hydroperoxide, as well as several fatty acid-derived hydroperoxides. In platelets catalyzes the reduction of 12-hydroperoxyeicosatetraenoic acid, the primary product of the arachidonate 12-lipoxygenase pathway. This is Glutathione peroxidase 1 (GPX1) from Pan troglodytes (Chimpanzee).